We begin with the raw amino-acid sequence, 230 residues long: Probable thioesterase YBR096W (230 aa).

Belongs to the lcsJ thioesterase family.

The polypeptide is Probable thioesterase YBR096W (Saccharomyces cerevisiae (strain ATCC 204508 / S288c) (Baker's yeast)).